The chain runs to 455 residues: Chromosomal replication initiator protein DnaA (455 aa).

Residues 1–75 (MDTNNNIEKE…EILSQNKVGM (75 aa)) are domain I, interacts with DnaA modulators. A domain II region spans residues 75-106 (MHLAHSVDVRIEVAPKIQISTQSNINYKATKM). The tract at residues 107–321 (SVKDSYTFEN…GAIIKISVNA (215 aa)) is domain III, AAA+ region. 4 residues coordinate ATP: G151, G153, K154, and T155. Residues 322-455 (NLMNASIDLN…DKKTAFNSSE (134 aa)) are domain IV, binds dsDNA.

The protein belongs to the DnaA family. Oligomerizes as a right-handed, spiral filament on DNA at oriC.

Its subcellular location is the cytoplasm. Its function is as follows. Plays an essential role in the initiation and regulation of chromosomal replication. ATP-DnaA binds to the origin of replication (oriC) to initiate formation of the DNA replication initiation complex once per cell cycle. Binds the DnaA box (a 9 base pair repeat at the origin) and separates the double-stranded (ds)DNA. Forms a right-handed helical filament on oriC DNA; dsDNA binds to the exterior of the filament while single-stranded (ss)DNA is stabiized in the filament's interior. The ATP-DnaA-oriC complex binds and stabilizes one strand of the AT-rich DNA unwinding element (DUE), permitting loading of DNA polymerase. After initiation quickly degrades to an ADP-DnaA complex that is not apt for DNA replication. Binds acidic phospholipids. The polypeptide is Chromosomal replication initiator protein DnaA (Helicobacter pylori (strain HPAG1)).